The sequence spans 797 residues: LPS-assembly protein LptD (797 aa).

The first 30 residues, 1-30 (MKEGRKRLRAGYCYMLAGVVGVASTGSSRA), serve as a signal peptide directing secretion.

This sequence belongs to the LptD family. In terms of assembly, component of the lipopolysaccharide transport and assembly complex. Interacts with LptE and LptA.

It is found in the cell outer membrane. Together with LptE, is involved in the assembly of lipopolysaccharide (LPS) at the surface of the outer membrane. The protein is LPS-assembly protein LptD of Hahella chejuensis (strain KCTC 2396).